Consider the following 323-residue polypeptide: uncharacterized protein (323 aa).

The helical transmembrane segment at Ile4–Pro24 threads the bilayer.

It localises to the membrane. This is an uncharacterized protein from Escherichia coli (strain K12).